Reading from the N-terminus, the 510-residue chain is Ent-sandaracopimaradiene 3-hydroxylase (510 aa).

The chain crosses the membrane as a helical span at residues 4 to 24 (MLVAGAGAAAVAAVGGLVAAA). A heme-binding site is contributed by C454.

Belongs to the cytochrome P450 family. Interacts with the rice dwarf virus (RDV) P2 protein. Heme is required as a cofactor. In terms of tissue distribution, expressed in leaf blades and sheaths, stems and panicles.

Its subcellular location is the membrane. It catalyses the reaction ent-sandaracopimara-8(14),15-diene + reduced [NADPH--hemoprotein reductase] + O2 = ent-sandaracopimaradien-3beta-ol + oxidized [NADPH--hemoprotein reductase] + H2O + H(+). It carries out the reaction 9beta-pimara-7,15-diene + reduced [NADPH--hemoprotein reductase] + O2 = 9beta-pimara-7,15-diene-3beta-ol + oxidized [NADPH--hemoprotein reductase] + H2O + H(+). Its function is as follows. Catalyzes the hydroxylation of ent-sandaracopimaradiene at the C3alpha position to produce ent-3beta-hydroxy-sandaracopimaradiene, an intermediates for the biosynthesis of oryzalexin D and oryzalexin E phytoalexins. Catalyzes the hydroxylation of ent-cassadiene at the C3alpha position to produce 3alpha-hydroxy-ent-cassadiene, which may be an intermediate for the biosynthesis of phytocassane phytoalexins. Catalyzes the hydroxylation of syn-pimaradiene (9-beta-pimara-7,15-diene) at the C3beta position to produce 3-beta-syn-pimaradiene. Can hydroxylate ent-kaurene in vitro, but the product is not ent-kauren-19-ol as expected for ent-kaurene oxidase activity. The sequence is that of Ent-sandaracopimaradiene 3-hydroxylase from Oryza sativa subsp. japonica (Rice).